Here is a 329-residue protein sequence, read N- to C-terminus: Haptoglobin (329 aa).

An N-linked (GlcNAc...) asparagine glycan is attached at asparagine 9. Residues 13 to 70 (VSLPKPPVIENGYVEHMIRYQCKPFYKLHTEGDGVYTLNSEKHWTNKAVGEKLPECEA) enclose the Sushi domain. 2 cysteine pairs are disulfide-bonded: cysteine 34–cysteine 68 and cysteine 72–cysteine 189. Arginine 84 is a propeptide. The Peptidase S1 domain occupies 85–327 (IMGGSVDAKG…VLAWVQETIA (243 aa)). Residues asparagine 107 and asparagine 214 are each glycosylated (N-linked (GlcNAc...) asparagine). Disulfide bonds link cysteine 232/cysteine 263 and cysteine 274/cysteine 304. Positions 241-246 (VPEKKS) are interaction with CD163.

The protein belongs to the peptidase S1 family. As to quaternary structure, tetramer of two alpha and two beta chains; disulfide-linked. The hemoglobin/haptoglobin complex is composed of a haptoglobin dimer bound to two hemoglobin alpha-beta dimers. Interacts with CD163. Interacts with ERGIC3. As to expression, expressed by the liver and secreted in plasma.

The protein localises to the secreted. It is found in the extracellular space. As a result of hemolysis, hemoglobin is found to accumulate in the kidney and is secreted in the urine. Haptoglobin captures, and combines with free plasma hemoglobin to allow hepatic recycling of heme iron and to prevent kidney damage. Haptoglobin also acts as an antioxidant, has antibacterial activity and plays a role in modulating many aspects of the acute phase response. Hemoglobin/haptoglobin complexes are rapidly cleared by the macrophage CD163 scavenger receptor expressed on the surface of liver Kupfer cells through an endocytic lysosomal degradation pathway. In Canis lupus familiaris (Dog), this protein is Haptoglobin (HP).